The primary structure comprises 56 residues: Large ribosomal subunit protein bL32 (56 aa).

The disordered stretch occupies residues 1–37 (MAVQQNKKSRSRRDMRRSHDALTTAAISVDKASGEKH). Residues 7-16 (KKSRSRRDMR) are compositionally biased toward basic residues.

The protein belongs to the bacterial ribosomal protein bL32 family.

The protein is Large ribosomal subunit protein bL32 (rpmF) of Pasteurella multocida (strain Pm70).